A 418-amino-acid chain; its full sequence is Gamma-glutamyl phosphate reductase (418 aa).

This sequence belongs to the gamma-glutamyl phosphate reductase family.

The protein localises to the cytoplasm. It carries out the reaction L-glutamate 5-semialdehyde + phosphate + NADP(+) = L-glutamyl 5-phosphate + NADPH + H(+). The protein operates within amino-acid biosynthesis; L-proline biosynthesis; L-glutamate 5-semialdehyde from L-glutamate: step 2/2. Functionally, catalyzes the NADPH-dependent reduction of L-glutamate 5-phosphate into L-glutamate 5-semialdehyde and phosphate. The product spontaneously undergoes cyclization to form 1-pyrroline-5-carboxylate. In Nitrosococcus oceani (strain ATCC 19707 / BCRC 17464 / JCM 30415 / NCIMB 11848 / C-107), this protein is Gamma-glutamyl phosphate reductase.